Here is a 266-residue protein sequence, read N- to C-terminus: MSSWAITGASRGIGFEFAKQLSADGSNQVFALIRSEPSAELAELSSGRENLHVIQADVTDAQGLSEAAAKVGELTGNKLDVFISNACHPGLDLRFHPTSAFLGKEKELKEEIDACMNVNLLGAINSINCFLPLIRNGELKKIIYITSPSGDAEFTRKCGVTVTVGYSITKAAMNLVMSKYAAELKGEGIKTLSLSPGWVDTDGTRDMAPTPEILEMALQVFQKFKPDLTGLMSVEESVRMQLNVINGLTVKQSGLALSHHGDYNWL.

Positions 13, 57, and 85 each coordinate NADP(+). Residues serine 147 and tyrosine 166 each act as proton donor in the active site. Residues tyrosine 166, lysine 170, valine 199, and threonine 201 each coordinate NADP(+). Catalysis depends on lysine 170, which acts as the Lowers pKa of active site Tyr.

Belongs to the short-chain dehydrogenases/reductases (SDR) family.

It functions in the pathway secondary metabolite biosynthesis; terpenoid biosynthesis. Short-chain dehydrogenase/reductase; part of the gene cluster that mediates the biosynthesis of the meroterpenoids arthripenoids. The pathway begins with the HR-PKS atnH that catalyzes two chain-extension steps to form a reduced triketide, which then primes the SAT domain in the NR-PKS atnG to initiate three more cycles of extension to give a linear hexaketide corresponding to the polyketide part of arthripenoids. The FAD-dependent monooxygenase atnJ then performs an oxidative decarboxylation at C11 of the atnH/atnG product, via an electrophilic aromatic hydroxylation with concomitant ipso-decarboxylation. The membrane-bound polyprenyl transferase atnF then introduces a farnesyl group before the FAD-dependent monooxygenase atnK functions as the first epoxidase on terminal C12'-C13' olefin, followed by a second epoxidation on C7'-C8' catalyzed by atnA. The terpene cyclase/mutase atnI then initiates the sequential tricyclic ring formation through protonation of the terminal epoxide and catalyzes the regioselective and stereoselective 6/6/6-tricyclic ring formation. The cytochrome P450 monooxygenase atnM is responsible for hydroxylating both C1' and C10'. The next steps may involve ketoreduction and acetyl transfer by the ketoreductase atnB and the acetyltransferase atnC, and lead to the production of arthripenoid B, the final biosynthetic product of the atn cluster. The hydroquinone moiety in arthripenoid B is prone to undergo spontaneous oxidation to afford a benzoquinone compound, a key intermediate for generating structure diversity. For instance, addition of a cysteine followed by ring contraction gives arthripenoid A, tautomerization gives the main product arthripenoid C, addition of a molecular of water or amine affords arthripenoid D or E, respectively, and loss of one water forms arthripenoid F. The sequence is that of Short-chain dehydrogenase/reductase atnB from Arthrinium sp.